A 41-amino-acid polypeptide reads, in one-letter code: MSGFKGYLSTVPVVFAIWLTFTAGLIIEINRLFPDGLVFSF.

The helical transmembrane segment at 7–27 threads the bilayer; that stretch reads YLSTVPVVFAIWLTFTAGLII.

Belongs to the PsaJ family.

Its subcellular location is the plastid. The protein localises to the chloroplast thylakoid membrane. May help in the organization of the PsaE and PsaF subunits. The chain is Photosystem I reaction center subunit IX from Bigelowiella natans (Pedinomonas minutissima).